Reading from the N-terminus, the 357-residue chain is UPF0283 membrane protein BAbS19_I09770 (357 aa).

Residues 1-36 (MSDKTPRKPTAFRLEQPARVSAASEQEEPRRPRAVK) form a disordered region. The span at 27-36 (EEPRRPRAVK) shows a compositional bias: basic and acidic residues. 2 consecutive transmembrane segments (helical) span residues 78 to 98 (ILFGALGILVSFAIGIWTEDL) and 109 to 129 (LGWTALGVAMVALAAFAAIIL).

This sequence belongs to the UPF0283 family.

The protein resides in the cell inner membrane. The protein is UPF0283 membrane protein BAbS19_I09770 of Brucella abortus (strain S19).